Consider the following 340-residue polypeptide: MTVSENAYAKSGVDVEAGYEVVSRIKKHVAKTERLGVLGALGGFGGSFDLSVLDVKEPVLISGTDGVGTKLMLAIRADKHDTIGIDCVAMCVNDIIAAGAEPLYFLDYIATGKNIPEKLEQVVAGVAEGCLQAGAALIGGETAEMPGMYDEDDYDLAGFAVGVAEKSQLIDGEKDVEAGDVLLGLASSGIHSNGYSLVRKVFADFDLNESLPELDQSLIDTLLTPTKIYVKELLPLIKQNKIKGIAHITGGGFHENLPRMFGNSLSAEIVEGSWDVLPIFKALEKYGSIKHEEMYEIFNMGIGMVIAVAPENAAALKKELNAFEIGQMVNRQEAPVVIKK.

This sequence belongs to the AIR synthase family.

It localises to the cytoplasm. The enzyme catalyses 2-formamido-N(1)-(5-O-phospho-beta-D-ribosyl)acetamidine + ATP = 5-amino-1-(5-phospho-beta-D-ribosyl)imidazole + ADP + phosphate + H(+). The protein operates within purine metabolism; IMP biosynthesis via de novo pathway; 5-amino-1-(5-phospho-D-ribosyl)imidazole from N(2)-formyl-N(1)-(5-phospho-D-ribosyl)glycinamide: step 2/2. This is Phosphoribosylformylglycinamidine cyclo-ligase from Lactococcus lactis subsp. cremoris (strain MG1363).